We begin with the raw amino-acid sequence, 1888 residues long: Nuclear pore membrane glycoprotein 210-like (1888 aa).

The N-terminal stretch at Met1–Leu35 is a signal peptide. 7 N-linked (GlcNAc...) asparagine glycosylation sites follow: Asn84, Asn304, Asn348, Asn495, Asn522, Asn812, and Asn931. In terms of domain architecture, BIG2 spans Phe1082–Gly1154. Asn1445 is a glycosylation site (N-linked (GlcNAc...) asparagine). The helical transmembrane segment at Ile1813–Asn1833 threads the bilayer. N-linked (GlcNAc...) asparagine glycosylation is present at Asn1859.

This sequence belongs to the NUP210 family.

Its subcellular location is the nucleus membrane. This Homo sapiens (Human) protein is Nuclear pore membrane glycoprotein 210-like (NUP210L).